A 494-amino-acid polypeptide reads, in one-letter code: UPF0371 protein Sez_1293 (494 aa).

This sequence belongs to the UPF0371 family.

The protein is UPF0371 protein Sez_1293 of Streptococcus equi subsp. zooepidemicus (strain MGCS10565).